The following is a 111-amino-acid chain: T cell receptor beta variable 30 (111 aa).

Positions Met1–Ser18 are cleaved as a signal peptide. The Ig-like domain occupies Gln19 to Ser111. A disulfide bridge links Cys40 with Cys108. A glycan (N-linked (GlcNAc...) asparagine) is linked at Asn80.

Alpha-beta TR is a heterodimer composed of an alpha and beta chain; disulfide-linked. The alpha-beta TR is associated with the transmembrane signaling CD3 coreceptor proteins to form the TR-CD3 (TcR or TCR). The assembly of alpha-beta TR heterodimers with CD3 occurs in the endoplasmic reticulum where a single alpha-beta TR heterodimer associates with one CD3D-CD3E heterodimer, one CD3G-CD3E heterodimer and one CD247 homodimer forming a stable octameric structure. CD3D-CD3E and CD3G-CD3E heterodimers preferentially associate with TR alpha and TR beta chains, respectively. The association of the CD247 homodimer is the last step of TcR assembly in the endoplasmic reticulum and is required for transport to the cell surface.

The protein localises to the cell membrane. Functionally, v region of the variable domain of T cell receptor (TR) beta chain that participates in the antigen recognition. Alpha-beta T cell receptors are antigen specific receptors which are essential to the immune response and are present on the cell surface of T lymphocytes. Recognize peptide-major histocompatibility (MH) (pMH) complexes that are displayed by antigen presenting cells (APC), a prerequisite for efficient T cell adaptive immunity against pathogens. Binding of alpha-beta TR to pMH complex initiates TR-CD3 clustering on the cell surface and intracellular activation of LCK that phosphorylates the ITAM motifs of CD3G, CD3D, CD3E and CD247 enabling the recruitment of ZAP70. In turn ZAP70 phosphorylates LAT, which recruits numerous signaling molecules to form the LAT signalosome. The LAT signalosome propagates signal branching to three major signaling pathways, the calcium, the mitogen-activated protein kinase (MAPK) kinase and the nuclear factor NF-kappa-B (NF-kB) pathways, leading to the mobilization of transcription factors that are critical for gene expression and essential for T cell growth and differentiation. The T cell repertoire is generated in the thymus, by V-(D)-J rearrangement. This repertoire is then shaped by intrathymic selection events to generate a peripheral T cell pool of self-MH restricted, non-autoaggressive T cells. Post-thymic interaction of alpha-beta TR with the pMH complexes shapes TR structural and functional avidity. This is T cell receptor beta variable 30 from Homo sapiens (Human).